The chain runs to 670 residues: Zinc finger protein 233 (670 aa).

A KRAB domain is found at 8–79 (VTFKDVAVVF…ETEIQGDGCS (72 aa)). Residues 258–280 (QTSDENGKGLSVGSNLELHQQLH) form a C2H2-type 1; degenerate zinc finger. Residues 311-336 (EKCYRNGDSGEGFSQGSHLQPHQRVS) form a C2H2-type 2; degenerate zinc finger. Residues 342 to 364 (YRCQVYARSSNQNSCLPSHELTH) form a C2H2-type 3; degenerate zinc finger. The C2H2-type 4; degenerate zinc-finger motif lies at 370-392 (CTCGRCGKGFHHSLDFDIHCVDS). The C2H2-type 5; degenerate zinc finger occupies 398–420 (CKCDVYDKGFSQTSQLQAHQRGH). C2H2-type zinc fingers lie at residues 452-474 (YKCEVCDKGFSKASNLQAHQRIH), 480-502 (YKCDVCDKNFSRNSHLQAHQRVH), 508-530 (YKCDTCGKDFSQISHLQAHQRVH), 536-558 (YKCETCGKGFSQSSHLQDHQQVH), 564-586 (YKCDVCGKGFSWSSHLQAHQRVH), 592-614 (YKCEECRKGFIWNSYLHVHQRIH), and 620-642 (YKCGMCGKSFSQTSHLQAHQRVH).

It belongs to the krueppel C2H2-type zinc-finger protein family.

It localises to the nucleus. May be involved in transcriptional regulation. The protein is Zinc finger protein 233 (ZNF233) of Homo sapiens (Human).